A 223-amino-acid polypeptide reads, in one-letter code: PKHD-type hydroxylase syc1482_d (223 aa).

The 99-residue stretch at 78-176 (RVHSLLFSRY…RFACVGWVQS (99 aa)) folds into the Fe2OG dioxygenase domain. Residues His96, Asp98, and His157 each contribute to the Fe cation site. Arg167 contacts 2-oxoglutarate.

Fe(2+) is required as a cofactor. The cofactor is L-ascorbate.

In Synechococcus sp. (strain ATCC 27144 / PCC 6301 / SAUG 1402/1) (Anacystis nidulans), this protein is PKHD-type hydroxylase syc1482_d.